The sequence spans 488 residues: DNA polymerase II small subunit (488 aa).

The protein belongs to the DNA polymerase delta/II small subunit family. In terms of assembly, heterodimer of a large subunit and a small subunit.

It carries out the reaction DNA(n) + a 2'-deoxyribonucleoside 5'-triphosphate = DNA(n+1) + diphosphate. The catalysed reaction is Exonucleolytic cleavage in the 3'- to 5'-direction to yield nucleoside 5'-phosphates.. In terms of biological role, possesses two activities: a DNA synthesis (polymerase) and an exonucleolytic activity that degrades single-stranded DNA in the 3' to 5' direction. Has a template-primer preference which is characteristic of a replicative DNA polymerase. In Thermoplasma acidophilum (strain ATCC 25905 / DSM 1728 / JCM 9062 / NBRC 15155 / AMRC-C165), this protein is DNA polymerase II small subunit (polB).